Consider the following 307-residue polypeptide: Pyridoxal 5'-phosphate synthase subunit PdxS (307 aa).

The span at 1 to 10 shows a compositional bias: basic residues; it reads MRGQPRPKLR. The interval 1–20 is disordered; that stretch reads MRGQPRPKLRRMTEQQTGTP. Aspartate 37 contributes to the D-ribose 5-phosphate binding site. Lysine 94 functions as the Schiff-base intermediate with D-ribose 5-phosphate in the catalytic mechanism. Glycine 166 is a binding site for D-ribose 5-phosphate. Arginine 178 provides a ligand contact to D-glyceraldehyde 3-phosphate. Residues glycine 227 and 248 to 249 contribute to the D-ribose 5-phosphate site; that span reads GS.

This sequence belongs to the PdxS/SNZ family. As to quaternary structure, in the presence of PdxT, forms a dodecamer of heterodimers.

It catalyses the reaction aldehydo-D-ribose 5-phosphate + D-glyceraldehyde 3-phosphate + L-glutamine = pyridoxal 5'-phosphate + L-glutamate + phosphate + 3 H2O + H(+). Its pathway is cofactor biosynthesis; pyridoxal 5'-phosphate biosynthesis. Functionally, catalyzes the formation of pyridoxal 5'-phosphate from ribose 5-phosphate (RBP), glyceraldehyde 3-phosphate (G3P) and ammonia. The ammonia is provided by the PdxT subunit. Can also use ribulose 5-phosphate and dihydroxyacetone phosphate as substrates, resulting from enzyme-catalyzed isomerization of RBP and G3P, respectively. The sequence is that of Pyridoxal 5'-phosphate synthase subunit PdxS from Deinococcus radiodurans (strain ATCC 13939 / DSM 20539 / JCM 16871 / CCUG 27074 / LMG 4051 / NBRC 15346 / NCIMB 9279 / VKM B-1422 / R1).